We begin with the raw amino-acid sequence, 480 residues long: Probable WRKY transcription factor 61 (480 aa).

Positions 30-108 are disordered; that stretch reads NQLMAKHNEP…RNYDDNEKSS (79 aa). 2 stretches are compositionally biased toward basic and acidic residues: residues 57–66 and 84–106; these read REKVNEREEL and NKEE…DNEK. The segment at residues 185 to 251 is a DNA-binding region (WRKY); the sequence is CETPTMNDGC…YEGTHNHPLP (67 aa).

Its subcellular location is the nucleus. Its function is as follows. Transcription factor. Interacts specifically with the W box (5'-(T)TGAC[CT]-3'), a frequently occurring elicitor-responsive cis-acting element. The chain is Probable WRKY transcription factor 61 (WRKY61) from Arabidopsis thaliana (Mouse-ear cress).